The sequence spans 514 residues: Maturase K (514 aa).

The protein belongs to the intron maturase 2 family. MatK subfamily.

The protein resides in the plastid. It is found in the chloroplast. In terms of biological role, usually encoded in the trnK tRNA gene intron. Probably assists in splicing its own and other chloroplast group II introns. This chain is Maturase K, found in Encephalartos altensteinii (Altenstein's bread tree).